Here is a 345-residue protein sequence, read N- to C-terminus: Opioid-binding protein/cell adhesion molecule (345 aa).

Positions 1–27 are cleaved as a signal peptide; the sequence is MGVCGYLFLPWKCLVVVSLRLLFLVPT. Ig-like C2-type domains are found at residues 39 to 126, 136 to 219, and 223 to 310; these read PKAM…PKTS, PQIM…VKIT, and PPYI…ASIT. Residues N44, N70, and N140 are each glycosylated (N-linked (GlcNAc...) asparagine). Cysteines 57 and 115 form a disulfide. 2 disulfide bridges follow: C157/C202 and C244/C296. N-linked (GlcNAc...) asparagine glycans are attached at residues N285, N293, and N306. Residue N322 is the site of GPI-anchor amidated asparagine attachment. A propeptide spans 323–345 (removed in mature form); it reads SASRALACLWLSGTFFAHFFIKF.

This sequence belongs to the immunoglobulin superfamily. IgLON family.

The protein localises to the cell membrane. In terms of biological role, binds opioids in the presence of acidic lipids; probably involved in cell contact. The protein is Opioid-binding protein/cell adhesion molecule (Opcml) of Rattus norvegicus (Rat).